A 238-amino-acid chain; its full sequence is Sugar fermentation stimulation protein homolog (238 aa).

The protein belongs to the SfsA family.

This is Sugar fermentation stimulation protein homolog from Histophilus somni (strain 129Pt) (Haemophilus somnus).